A 461-amino-acid polypeptide reads, in one-letter code: pre-mRNA splicing regulator USH1G (461 aa).

ANK repeat units lie at residues 31 to 60, 64 to 93, and 97 to 126; these read DGMTPTLWAAYHGNLESLRLIVSRGGDPDK, WGNTPLHLAASNGHLHCLSFLVSFGANIWC, and DYHTPLDMAAMKGHMECVRYLDSIAAKQSS. The segment at 329-368 is disordered; sequence LGREDGGLDGAGTPRGRLHSSPSLDDDSLGSANSLQDRSC. The 63-residue stretch at 385 to 447 folds into the SAM domain; it reads LEPETSPLET…KILGAVRRRR (63 aa). Position 422 is a phosphoserine (Ser-422).

Part of a complex composed of USH1C, USH1G and MYO7A. Interacts with USH1C (via the first PDZ domain). Interacts with PDZD7. Interacts with CDH23 and PCDH15; these interactions may recruit USH1G to the plasma membrane. Interacts with intraflagellar transport proteins IFT20, IFT52 and IFT57. Interacts with splicing factors SF3B1, PRPF6, PRPF31 and SON. Interacts with the U4/U6.U5 tri-small nuclear ribonucleoprotein (tri-snRNP) complex in the presence of pre-mRNAs. Interacts (via SAM domain) with MAGI2 (via PDZ 6 domain); the interaction is triggered by phosphorylation of USH1G by CK2 and negatively regulates MAGI2-mediated endocytosis. As to expression, detected in stereocilia from cochlear hair cells (at protein level). Detected in retinal photoreceptor cell cilia (at protein level). Highly expressed in the cochlea, testis, cerebellum and eye, and low levels in brain, thymus and spleen. Significant signals detected in the neurosensory epithelium of inner ear cochlea and saccule, especially in inner and outer hair cells.

Its subcellular location is the cytoplasm. It localises to the cytosol. The protein localises to the cytoskeleton. The protein resides in the cell membrane. It is found in the cell projection. Its subcellular location is the cilium. It localises to the nucleus speckle. The protein localises to the nucleus. The protein resides in the cajal body. It is found in the microtubule organizing center. Its subcellular location is the centrosome. It localises to the photoreceptor inner segment. Functionally, plays a role in pre-mRNA splicing by regulating the release and transfer of U4/U6.U5 tri-small nuclear ribonucleoprotein (tri-snRNP) complexes from their assembly site in Cajal bodies to nuclear speckles, thereby contributing to the assembly of the pre-catalytic spliceosome on target pre-mRNAs. May also participate in recycling of snRNPs back to Cajal bodies during splicing. Plays a role in regulating MAGI2-mediated endocytosis. Anchoring/scaffolding protein that is a part of the functional network formed by USH1C, USH1G, CDH23 and MYO7A that mediates mechanotransduction in cochlear hair cells. Required for normal development and maintenance of cochlear hair cell bundles. Required for normal hearing. In Mus musculus (Mouse), this protein is pre-mRNA splicing regulator USH1G (Ush1g).